Here is a 364-residue protein sequence, read N- to C-terminus: Flagellar P-ring protein (364 aa).

An N-terminal signal peptide occupies residues 1–21 (MNVFKVFCLMVLLGWQLPAMA).

Belongs to the FlgI family. As to quaternary structure, the basal body constitutes a major portion of the flagellar organelle and consists of four rings (L,P,S, and M) mounted on a central rod.

The protein localises to the periplasm. The protein resides in the bacterial flagellum basal body. In terms of biological role, assembles around the rod to form the L-ring and probably protects the motor/basal body from shearing forces during rotation. In Pseudoalteromonas translucida (strain TAC 125), this protein is Flagellar P-ring protein.